The primary structure comprises 97 residues: Large ribosomal subunit protein eL30 (97 aa).

The protein belongs to the eukaryotic ribosomal protein eL30 family.

The chain is Large ribosomal subunit protein eL30 from Methanoregula boonei (strain DSM 21154 / JCM 14090 / 6A8).